We begin with the raw amino-acid sequence, 302 residues long: Myb-related protein Hv33 (302 aa).

HTH myb-type domains follow at residues 11 to 63 (QPKV…INYL) and 64 to 118 (RPDL…KKKL). 2 consecutive DNA-binding regions (H-T-H motif) follow at residues 39–63 (WSSV…INYL) and 91–114 (WSQI…NSCI). Residues 137 to 158 (ATAAAALPDAEEEDRKPLCPAV) are disordered.

In terms of tissue distribution, germinating seed and apical meristem of shoot and root.

The protein resides in the nucleus. Functionally, possible transcription activator in response to an external signal. May be involved in the regulation of flavonoid biosynthesis. The chain is Myb-related protein Hv33 (MYB2) from Hordeum vulgare (Barley).